The primary structure comprises 572 residues: Sulfite reductase [NADPH] hemoprotein beta-component (572 aa).

4 residues coordinate [4Fe-4S] cluster: Cys437, Cys443, Cys482, and Cys486. Cys486 lines the siroheme pocket.

The protein belongs to the nitrite and sulfite reductase 4Fe-4S domain family. In terms of assembly, alpha(8)-beta(8). The alpha component is a flavoprotein, the beta component is a hemoprotein. The cofactor is siroheme. [4Fe-4S] cluster serves as cofactor.

It catalyses the reaction hydrogen sulfide + 3 NADP(+) + 3 H2O = sulfite + 3 NADPH + 4 H(+). It participates in sulfur metabolism; hydrogen sulfide biosynthesis; hydrogen sulfide from sulfite (NADPH route): step 1/1. Component of the sulfite reductase complex that catalyzes the 6-electron reduction of sulfite to sulfide. This is one of several activities required for the biosynthesis of L-cysteine from sulfate. This Staphylococcus epidermidis (strain ATCC 12228 / FDA PCI 1200) protein is Sulfite reductase [NADPH] hemoprotein beta-component.